We begin with the raw amino-acid sequence, 586 residues long: U-box domain-containing protein 73 (586 aa).

The tract at residues 21-122 (KADMSGLQRS…AAGADDGPTR (102 aa)) is disordered. Low complexity predominate over residues 50 to 60 (RSAPTSPLRTP). Positions 182–258 (PIPIAHDGTL…SAWCLDHSDL (77 aa)) constitute a U-box domain.

It catalyses the reaction S-ubiquitinyl-[E2 ubiquitin-conjugating enzyme]-L-cysteine + [acceptor protein]-L-lysine = [E2 ubiquitin-conjugating enzyme]-L-cysteine + N(6)-ubiquitinyl-[acceptor protein]-L-lysine.. It participates in protein modification; protein ubiquitination. Possesses E3 ubiquitin-protein ligase in vitro. The protein is U-box domain-containing protein 73 (PUB73) of Oryza sativa subsp. japonica (Rice).